The sequence spans 24 residues: Poly-His-poly-Gly peptide 1 (24 aa).

Residues 1–13 (EDDHHHHHHHHHG) are compositionally biased toward basic residues. Residues 1–24 (EDDHHHHHHHHHGVGGGGGGGGGG) are disordered. The span at 14–24 (VGGGGGGGGGG) shows a compositional bias: gly residues.

In terms of tissue distribution, expressed by the venom gland.

The protein resides in the secreted. In terms of biological role, may serve as a metalloproteinase inhibitor during glandular storage. Their inhibition may be instantly disengaged, by dilution or physiochemical change, when venom is injected into tissue of the victim. This Atheris chlorechis (Western bush viper) protein is Poly-His-poly-Gly peptide 1.